Consider the following 884-residue polypeptide: Alanine--tRNA ligase (884 aa).

Zn(2+) is bound by residues His-568, His-572, Cys-670, and His-674.

This sequence belongs to the class-II aminoacyl-tRNA synthetase family. Zn(2+) is required as a cofactor.

Its subcellular location is the cytoplasm. It catalyses the reaction tRNA(Ala) + L-alanine + ATP = L-alanyl-tRNA(Ala) + AMP + diphosphate. Its function is as follows. Catalyzes the attachment of alanine to tRNA(Ala) in a two-step reaction: alanine is first activated by ATP to form Ala-AMP and then transferred to the acceptor end of tRNA(Ala). Also edits incorrectly charged Ser-tRNA(Ala) and Gly-tRNA(Ala) via its editing domain. This chain is Alanine--tRNA ligase, found in Synechococcus sp. (strain JA-2-3B'a(2-13)) (Cyanobacteria bacterium Yellowstone B-Prime).